The chain runs to 350 residues: Peroxidase 24 (350 aa).

The first 27 residues, 1–27 (MANKSLEIRFLFPLVLFLVVKLLCVDG), serve as a signal peptide directing secretion. Cystine bridges form between cysteine 55–cysteine 135, cysteine 88–cysteine 93, cysteine 141–cysteine 346, and cysteine 221–cysteine 253. An N-linked (GlcNAc...) asparagine glycan is attached at asparagine 73. The Proton acceptor role is filled by histidine 86. Ca(2+)-binding residues include aspartate 87, valine 90, glycine 92, aspartate 94, and serine 96. Proline 184 serves as a coordination point for substrate. The N-linked (GlcNAc...) asparagine glycan is linked to asparagine 189. Position 214 (histidine 214) interacts with heme b. Threonine 215 provides a ligand contact to Ca(2+). A glycan (N-linked (GlcNAc...) asparagine) is linked at asparagine 230. Ca(2+)-binding residues include aspartate 269 and aspartate 277.

The protein belongs to the peroxidase family. Classical plant (class III) peroxidase subfamily. Heme b serves as cofactor. The cofactor is Ca(2+).

The protein localises to the secreted. It carries out the reaction 2 a phenolic donor + H2O2 = 2 a phenolic radical donor + 2 H2O. In terms of biological role, removal of H(2)O(2), oxidation of toxic reductants, biosynthesis and degradation of lignin, suberization, auxin catabolism, response to environmental stresses such as wounding, pathogen attack and oxidative stress. These functions might be dependent on each isozyme/isoform in each plant tissue. This Arabidopsis thaliana (Mouse-ear cress) protein is Peroxidase 24 (PER24).